Here is a 4243-residue protein sequence, read N- to C-terminus: Fibrocystin-L (4243 aa).

An N-terminal signal peptide occupies residues 1-20 (MGHLWLLGIWGLCGLLLCAA). Over 21–4210 (DPSTDGSQII…KASTVGTYAQ (4190 aa)) the chain is Extracellular. IPT/TIG domains are found at residues 31–129 (PKVT…TCKG), 146–255 (PTIR…KMAY), and 270–361 (AEVT…ILEY). Threonine 122 carries an O-linked (GalNAc...) threonine glycan. In terms of domain architecture, PA14 spans 337–492 (PGGRGLKLEV…NVYTEQQTGD (156 aa)). Residue threonine 445 is glycosylated (O-linked (GalNAc...) threonine). IPT/TIG domains are found at residues 1067–1151 (PLVL…EFYF), 1155–1234 (SQIS…AFSY), 1240–1322 (PIIT…RDKL), 1330–1469 (LEVT…SFSY), 1566–1649 (PSIS…TLSN), 1659–1743 (PNID…TFSY), 1749–1828 (PYIT…NLTV), 1831–1910 (PPVA…LFTY), 1916–1997 (PFLR…VFEY), 1999–2085 (LNIQ…PFTY), and 2091–2176 (PLIT…DFLY). O-linked (GalNAc...) threonine glycosylation is found at threonine 1803 and threonine 1839. In terms of domain architecture, G8 1 spans 2184 to 2304 (FSWGGKSPPE…VPVTWTRLAH (121 aa)). O-linked (GalNAc...) threonine glycosylation occurs at threonine 2320. PbH1 repeat units follow at residues 2508–2530 (THHL…FIED), 2566–2588 (NPNN…WYRM), 2665–2687 (GGAL…ETKR), and 2733–2756 (SEGL…ALGV). Residues 3036-3174 (SFWQSSRENN…HSIYKTKLSE (139 aa)) form the G8 2 domain. PbH1 repeat units follow at residues 3293–3315 (KGNA…RDST), 3355–3377 (TDGL…RIWG), 3416–3438 (GTNT…RIDG), 3471–3493 (PGCS…YFQT), and 3527–3548 (SKNV…NCSD). Threonine 3736 carries an O-linked (GalNAc...) threonine glycan. A helical membrane pass occupies residues 4211–4231 (IMTVVISCLVGRMWLLEIFMA). Topologically, residues 4232 to 4243 (AVSTLNITLRSY) are cytoplasmic.

The protein resides in the membrane. Its subcellular location is the cell projection. It is found in the stereocilium membrane. Functionally, component of hair-cell stereocilia coat. Required for normal hearing. In Homo sapiens (Human), this protein is Fibrocystin-L (PKHD1L1).